The chain runs to 360 residues: Phosphoserine aminotransferase (360 aa).

R41 contacts L-glutamate. Residues W101, T152, D172, and Q195 each coordinate pyridoxal 5'-phosphate. K196 carries the post-translational modification N6-(pyridoxal phosphate)lysine. 237–238 (NT) contributes to the pyridoxal 5'-phosphate binding site.

The protein belongs to the class-V pyridoxal-phosphate-dependent aminotransferase family. SerC subfamily. Homodimer. Pyridoxal 5'-phosphate serves as cofactor.

Its subcellular location is the cytoplasm. It catalyses the reaction O-phospho-L-serine + 2-oxoglutarate = 3-phosphooxypyruvate + L-glutamate. The enzyme catalyses 4-(phosphooxy)-L-threonine + 2-oxoglutarate = (R)-3-hydroxy-2-oxo-4-phosphooxybutanoate + L-glutamate. It functions in the pathway amino-acid biosynthesis; L-serine biosynthesis; L-serine from 3-phospho-D-glycerate: step 2/3. It participates in cofactor biosynthesis; pyridoxine 5'-phosphate biosynthesis; pyridoxine 5'-phosphate from D-erythrose 4-phosphate: step 3/5. In terms of biological role, catalyzes the reversible conversion of 3-phosphohydroxypyruvate to phosphoserine and of 3-hydroxy-2-oxo-4-phosphonooxybutanoate to phosphohydroxythreonine. This chain is Phosphoserine aminotransferase, found in Paraburkholderia phymatum (strain DSM 17167 / CIP 108236 / LMG 21445 / STM815) (Burkholderia phymatum).